We begin with the raw amino-acid sequence, 146 residues long: Hemoglobin subunit beta (146 aa).

V1 carries the N-acetylvaline modification. The Globin domain maps to 2–146; the sequence is QLSGEEKAAV…VANALAHKYH (145 aa). S44 is modified (phosphoserine). K59 carries the post-translational modification N6-acetyllysine. Residue H63 coordinates heme b. K82 carries the N6-acetyllysine modification. Residue H92 participates in heme b binding. At C93 the chain carries S-nitrosocysteine. K144 bears the N6-acetyllysine mark.

This sequence belongs to the globin family. In terms of assembly, heterotetramer of two alpha chains and two beta chains. Red blood cells.

Its function is as follows. Involved in oxygen transport from the lung to the various peripheral tissues. The polypeptide is Hemoglobin subunit beta (HBB) (Equus hemionus kulan (Turkmenian kulan)).